Here is a 402-residue protein sequence, read N- to C-terminus: Putative F-box protein At3g20030 (402 aa).

The F-box domain maps to 1–56 (MTMMSDLSQDLLEEILSRVPRTSLGAVRSTCKRWNTLFKDRILCKAEETRDQFRFI).

The sequence is that of Putative F-box protein At3g20030 from Arabidopsis thaliana (Mouse-ear cress).